Here is a 268-residue protein sequence, read N- to C-terminus: Bis(5'-nucleosyl)-tetraphosphatase, symmetrical (268 aa).

Belongs to the Ap4A hydrolase family.

It catalyses the reaction P(1),P(4)-bis(5'-adenosyl) tetraphosphate + H2O = 2 ADP + 2 H(+). Its function is as follows. Hydrolyzes diadenosine 5',5'''-P1,P4-tetraphosphate to yield ADP. The sequence is that of Bis(5'-nucleosyl)-tetraphosphatase, symmetrical from Vibrio campbellii (strain ATCC BAA-1116).